The primary structure comprises 221 residues: MTIVHVITIDGPTASGKGTVAHKVADAVGYHLLDSGALYRLVALASDRIGVDIEDVDGLAKTASRLDVKFGPDRVWLSGEEVSLAIRAEAIGNRASAIAVHQPVRDALTKLQRDFRKLPGLVADGRDMGTVIFPDAQLKVFLTASVEARARRRYKQLIDKGISANIEDLLRDLEARDARDRNRAAAPLRPAEDAKLLDTSDMTVDQAVAQVLEWFAAVRKA.

Residue 11–19 participates in ATP binding; the sequence is GPTASGKGT.

It belongs to the cytidylate kinase family. Type 1 subfamily.

Its subcellular location is the cytoplasm. The enzyme catalyses CMP + ATP = CDP + ADP. It carries out the reaction dCMP + ATP = dCDP + ADP. This chain is Cytidylate kinase, found in Cupriavidus pinatubonensis (strain JMP 134 / LMG 1197) (Cupriavidus necator (strain JMP 134)).